The chain runs to 467 residues: Ribulose bisphosphate carboxylase large chain (467 aa).

The propeptide occupies 1 to 2; sequence MS. Pro-3 carries the N-acetylproline modification. At Lys-14 the chain carries N6,N6,N6-trimethyllysine. Substrate is bound by residues Asn-123 and Thr-173. The Proton acceptor role is filled by Lys-175. Lys-177 contacts substrate. The Mg(2+) site is built by Lys-201, Asp-203, and Glu-204. The residue at position 201 (Lys-201) is an N6-carboxylysine. His-294 acts as the Proton acceptor in catalysis. Arg-295, His-327, and Ser-379 together coordinate substrate.

It belongs to the RuBisCO large chain family. Type I subfamily. As to quaternary structure, heterohexadecamer of 8 large chains and 8 small chains; disulfide-linked. The disulfide link is formed within the large subunit homodimers. It depends on Mg(2+) as a cofactor. Post-translationally, the disulfide bond which can form in the large chain dimeric partners within the hexadecamer appears to be associated with oxidative stress and protein turnover.

Its subcellular location is the plastid. The protein resides in the chloroplast. The enzyme catalyses 2 (2R)-3-phosphoglycerate + 2 H(+) = D-ribulose 1,5-bisphosphate + CO2 + H2O. The catalysed reaction is D-ribulose 1,5-bisphosphate + O2 = 2-phosphoglycolate + (2R)-3-phosphoglycerate + 2 H(+). Functionally, ruBisCO catalyzes two reactions: the carboxylation of D-ribulose 1,5-bisphosphate, the primary event in carbon dioxide fixation, as well as the oxidative fragmentation of the pentose substrate in the photorespiration process. Both reactions occur simultaneously and in competition at the same active site. This is Ribulose bisphosphate carboxylase large chain from Calamus usitatus (Palm tree).